Here is a 413-residue protein sequence, read N- to C-terminus: Aspartate aminotransferase, cytoplasmic (413 aa).

L-aspartate is bound by residues Gly39 and Trp141. Position 149 is a phosphoserine (Ser149). Asn195 is a binding site for L-aspartate. Residue Lys259 is modified to N6-(pyridoxal phosphate)lysine. Position 387 (Arg387) interacts with L-aspartate.

Belongs to the class-I pyridoxal-phosphate-dependent aminotransferase family. In terms of assembly, homodimer. Pyridoxal 5'-phosphate is required as a cofactor.

It localises to the cytoplasm. The enzyme catalyses L-aspartate + 2-oxoglutarate = oxaloacetate + L-glutamate. It carries out the reaction L-cysteine + 2-oxoglutarate = 2-oxo-3-sulfanylpropanoate + L-glutamate. The catalysed reaction is (2S)-2-aminobutanoate + 2-oxoglutarate = 2-oxobutanoate + L-glutamate. It catalyses the reaction 3-sulfino-L-alanine + 2-oxoglutarate = 3-sulfinopyruvate + L-glutamate. In terms of biological role, biosynthesis of L-glutamate from L-aspartate or L-cysteine. Important regulator of levels of glutamate, the major excitatory neurotransmitter of the vertebrate central nervous system. Acts as a scavenger of glutamate in brain neuroprotection. The aspartate aminotransferase activity is involved in hepatic glucose synthesis during development and in adipocyte glyceroneogenesis. Using L-cysteine as substrate, regulates levels of mercaptopyruvate, an important source of hydrogen sulfide. Mercaptopyruvate is converted into H(2)S via the action of 3-mercaptopyruvate sulfurtransferase (3MST). Hydrogen sulfide is an important synaptic modulator and neuroprotectant in the brain. This is Aspartate aminotransferase, cytoplasmic from Pan troglodytes (Chimpanzee).